A 117-amino-acid polypeptide reads, in one-letter code: Large ribosomal subunit protein bL20 (117 aa).

Belongs to the bacterial ribosomal protein bL20 family.

In terms of biological role, binds directly to 23S ribosomal RNA and is necessary for the in vitro assembly process of the 50S ribosomal subunit. It is not involved in the protein synthesizing functions of that subunit. The polypeptide is Large ribosomal subunit protein bL20 (Campylobacter jejuni subsp. jejuni serotype O:2 (strain ATCC 700819 / NCTC 11168)).